A 290-amino-acid chain; its full sequence is Arginine N-acetyltransferase avaD (290 aa).

157–163 (NQAHFEA) is a binding site for acetyl-CoA.

The protein belongs to the acetyltransferase family. GCN5 subfamily.

It functions in the pathway secondary metabolite metabolism. Arginine N-acetyltransferase; part of the cluster that mediates the biosynthesis of a highly modified cyclo-arginine-tryptophan dipeptide (cRW). Within the pathway, avaD catalyzes the N-acetylation of the guanidine group. The first step of the pathway is perfornmed by the arginine-containing cyclodipeptide synthase (RCPDS) avaA that acts as the scaffold-generating enzyme and is responsible for formation of the cyclo-Arg-Trp (cRW) diketopiperazine. AvaB then acts as a multifunctional flavoenzyme that is responsible for generating the cyclo-Arg-formylkynurenine DKP, which can be deformylated by avaC. AvaB then further catalyzes an additional N-oxidation followed by cyclization and dehydration. The next step is an N-acetylation of the guanidine group catalyzed by the arginine N-acetyltransferase avaD. The roles of the additional enzymes identified within the ava cluster still have to be determined. The protein is Arginine N-acetyltransferase avaD of Aspergillus versicolor.